An 839-amino-acid polypeptide reads, in one-letter code: Katanin p80 WD40 repeat-containing subunit B1 homolog KTN80.3 (839 aa).

7 WD repeats span residues 14–54 (AHSA…AILS), 57–96 (GHSSGIDSVTFDASEGLVAAGAASGTIKLWDLEEAKVVRT), 99–138 (GHRSNCVSVNFHPFGEFFASGSLDTNLKIWDIRKKGCIHT), 141–182 (GHTR…HEFK), 184–222 (HEGKIQSLDFHPHEFLLATGSADKTVKFWDLETFELIGS), 225–265 (TETT…DGVD), and 267–304 (GWSNLSDMNVHEGKLLGCSYNQNCVGVWVVDLSRTEPM). Positions 115–131 (FFASGSLDTNLKIWDIR) match the DWD box motif. 4 disordered regions span residues 303 to 340 (PMSGGATQSNSHPEKTSGSGRDQAGLNDNSSKVILGKL), 357 to 435 (GKLS…KSAS), 501 to 561 (LQSK…RTNK), and 575 to 648 (SLVR…PSNM). Composition is skewed to polar residues over residues 307–334 (GATQSNSHPEKTSGSGRDQAGLNDNSSK), 375–385 (TGRSSVSQSSD), 411–435 (TLSSTGSVSDSPHRVTLTSAPKSAS), 501–533 (LQSKAADSRRLSSSRNEPDLPTSSLLERSQSQP), 589–602 (DLISYNANRDSSPT), and 630–648 (VSSSSGGNMTAPNSRPSNM).

It belongs to the WD repeat KATNB1 family. In terms of assembly, component of KTN80-KTN1 complexes composed of a hexamer of KTN1-KTN80 heterodimers that sense microtubule (MT) geometry to confer precise MT severing. Interacts directly with AAA1/KTN1 and KTN80.1, and weakly with KTN80.4. As to expression, expressed in siliques, flowers, leaves, stems and roots.

It localises to the cytoplasm. It is found in the cytoskeleton. May participate in a complex which severs microtubules in an ATP-dependent manner. Microtubule severing may promote rapid reorganization of cellular microtubule arrays. Confers precision to microtubule (MT) severing by specific targeting of KTN1 to MT cleavage sites such as crossover or branching nucleation sites. Together with other KTN80s, regulates cell elongation by modulating MT organization. This Arabidopsis thaliana (Mouse-ear cress) protein is Katanin p80 WD40 repeat-containing subunit B1 homolog KTN80.3.